A 277-amino-acid polypeptide reads, in one-letter code: Energy-coupling factor transporter transmembrane protein EcfT (277 aa).

Helical transmembrane passes span 39 to 59 (ITIL…YAII), 61 to 81 (FFCF…WNGV), 85 to 105 (IGLI…GHVF), 121 to 141 (AIYI…MTVT), 163 to 183 (VPVD…PTLF), and 254 to 274 (SKYD…LLIF).

Belongs to the energy-coupling factor EcfT family. As to quaternary structure, forms a stable energy-coupling factor (ECF) transporter complex composed of 2 membrane-embedded substrate-binding proteins (S component), 2 ATP-binding proteins (A component) and 2 transmembrane proteins (T component). May be able to interact with more than 1 S component at a time.

Its subcellular location is the cell membrane. Functionally, transmembrane (T) component of an energy-coupling factor (ECF) ABC-transporter complex. Unlike classic ABC transporters this ECF transporter provides the energy necessary to transport a number of different substrates. In Lactobacillus helveticus (strain DPC 4571), this protein is Energy-coupling factor transporter transmembrane protein EcfT.